Here is a 558-residue protein sequence, read N- to C-terminus: Formate--tetrahydrofolate ligase (558 aa).

66 to 73 (TPAGEGKT) is an ATP binding site.

The protein belongs to the formate--tetrahydrofolate ligase family.

The enzyme catalyses (6S)-5,6,7,8-tetrahydrofolate + formate + ATP = (6R)-10-formyltetrahydrofolate + ADP + phosphate. It functions in the pathway one-carbon metabolism; tetrahydrofolate interconversion. The sequence is that of Formate--tetrahydrofolate ligase from Clostridium kluyveri (strain NBRC 12016).